Reading from the N-terminus, the 160-residue chain is S-ribosylhomocysteine lyase (160 aa).

Fe cation is bound by residues His57, His61, and Cys127.

This sequence belongs to the LuxS family. In terms of assembly, homodimer. It depends on Fe cation as a cofactor.

It catalyses the reaction S-(5-deoxy-D-ribos-5-yl)-L-homocysteine = (S)-4,5-dihydroxypentane-2,3-dione + L-homocysteine. Involved in the synthesis of autoinducer 2 (AI-2) which is secreted by bacteria and is used to communicate both the cell density and the metabolic potential of the environment. The regulation of gene expression in response to changes in cell density is called quorum sensing. Catalyzes the transformation of S-ribosylhomocysteine (RHC) to homocysteine (HC) and 4,5-dihydroxy-2,3-pentadione (DPD). This chain is S-ribosylhomocysteine lyase, found in Streptococcus mutans serotype c (strain ATCC 700610 / UA159).